The sequence spans 173 residues: Ribosome maturation factor RimP (173 aa).

It belongs to the RimP family.

It localises to the cytoplasm. Required for maturation of 30S ribosomal subunits. The polypeptide is Ribosome maturation factor RimP (Pelodictyon phaeoclathratiforme (strain DSM 5477 / BU-1)).